The following is a 483-amino-acid chain: Cysteine--tRNA ligase (483 aa).

Cysteine 29 lines the Zn(2+) pocket. The 'HIGH' region motif lies at 31–41 (PTVYGHAHLGH). Zn(2+) is bound by residues cysteine 221, histidine 246, and glutamate 250. A 'KMSKS' region motif is present at residues 278–282 (KMGKS). Residue lysine 281 participates in ATP binding.

Belongs to the class-I aminoacyl-tRNA synthetase family. In terms of assembly, monomer. It depends on Zn(2+) as a cofactor.

It is found in the cytoplasm. The catalysed reaction is tRNA(Cys) + L-cysteine + ATP = L-cysteinyl-tRNA(Cys) + AMP + diphosphate. The sequence is that of Cysteine--tRNA ligase from Chlorobium luteolum (strain DSM 273 / BCRC 81028 / 2530) (Pelodictyon luteolum).